The sequence spans 489 residues: Heme-based aerotactic transducer HemAT (489 aa).

The Methyl-accepting transducer domain occupies 218-454; the sequence is PLSSLEATSQ…EVAEMVDDVD (237 aa).

The protein belongs to the methyl-accepting chemotaxis (MCP) protein family. Homotetramer.

Heme-containing signal transducer responsible for aerotaxis, the migratory response toward or away from oxygen. This Halobacterium salinarum (strain ATCC 700922 / JCM 11081 / NRC-1) (Halobacterium halobium) protein is Heme-based aerotactic transducer HemAT (hemAT).